The sequence spans 274 residues: Probable glycerophosphodiester phosphodiesterase 1 (274 aa).

Positions 12-264 (PFVVAHRGAS…HHPGRTKAWL (253 aa)) constitute a GP-PDE domain. Histidine 17 functions as the Proton acceptor in the catalytic mechanism. Glutamate 44 and aspartate 46 together coordinate Ca(2+). Histidine 59 (proton donor) is an active-site residue. Glutamate 126 lines the Ca(2+) pocket.

Belongs to the glycerophosphoryl diester phosphodiesterase family. Ca(2+) serves as cofactor.

The enzyme catalyses a sn-glycero-3-phosphodiester + H2O = an alcohol + sn-glycerol 3-phosphate + H(+). Glycerophosphodiester phosphodiesterase hydrolyzes glycerophosphodiesters into glycerol-3-phosphate (G3P) and the corresponding alcohol. This chain is Probable glycerophosphodiester phosphodiesterase 1 (glpQ1), found in Mycobacterium tuberculosis (strain CDC 1551 / Oshkosh).